Here is a 501-residue protein sequence, read N- to C-terminus: MGSRPPCGATSSARRACQFPAPMAAAREPELPQEAPATEPAPPPACRFFLEGRCRFGARCRQPHPGAPAPPGREAQPEAGAKKPPLRTAADVIQRIRWDPRLDPADFSVGYVDRFLGVREEPFSAFCWDQPLAALGPGVLAVPQHRVRFFRFHGRLVWDRASRTDLVFGSGSAAGRGPTILDAPNTEGAHGAEGAEWTLAGTGQEAQAAPKRGSTRPLCTGHQEPGVEEPGELEAAQERALGTAADLGTLAPRGRLAGVTEEALKPTAATRTTLLGGKEAQALGVPGGSAETTEAEWGPAAWPEDKRARLSVAAPCQPRPTHFVALMVTEPGLQAEVTKAQEYLVHVAPHCANFLVPSQNLHLTLALLRLAGAGEEAAAIGALRRALLAPGLNAPPRLSFRKLVLLGPHVLCAPPSPTLESMAQVLSQRLEAEGLSTLQSPGQLHPHLTVAKVPHGSQVHLPKLEFTLSQEVGCQPLQTLWLCRIGRTGGPFQPLAEIRLE.

4 disordered regions span residues 1–43, 61–86, 203–234, and 281–300; these read MGSR…PAPP, RQPH…KPPL, GQEA…GELE, and QALG…WGPA. The segment at 40–67 adopts a C3H1-type zinc-finger fold; the sequence is PAPPPACRFFLEGRCRFGARCRQPHPGA.

The polypeptide is Leukocyte receptor cluster member 9 (LENG9) (Homo sapiens (Human)).